We begin with the raw amino-acid sequence, 308 residues long: 1,4-dihydroxy-2-naphthoate octaprenyltransferase (308 aa).

Over 1 to 20 (MTEQQISRTQAWLESLRPKT) the chain is Cytoplasmic. The helical transmembrane segment at 21–41 (LPLAFAAIIVGTALAWWQGHF) threads the bilayer. Residue Asp42 is a topological domain, periplasmic. A helical transmembrane segment spans residues 43 to 63 (PLVALLALITAGLLQILSNLA). Over 64 to 97 (NDYGDAVKGSDKPDRIGPLRGMQKGVITQQEMKR) the chain is Cytoplasmic. Residues 98-118 (ALIITVVLICLSGLALVAVAC) traverse the membrane as a helical segment. Residues 119–123 (HTLAD) are Periplasmic-facing. The helical transmembrane segment at 124 to 144 (FVGFLILGGLSIIAAITYTVG) threads the bilayer. Residues 145 to 148 (NRPY) lie on the Cytoplasmic side of the membrane. A helical membrane pass occupies residues 149-169 (GYIGLGDISVLVFFGWLSVMG). The Periplasmic segment spans residues 170 to 176 (SWYLQAH). The chain crosses the membrane as a helical span at residues 177–197 (TLIPALILPATACGLLATAVL). Topologically, residues 198–227 (NINNLRDINSDRENGKNTLVVRLGEVNARR) are cytoplasmic. A helical membrane pass occupies residues 228–247 (YHACLLMGSLVCLALFNLFS). The Periplasmic portion of the chain corresponds to 248–250 (LHS). The chain crosses the membrane as a helical span at residues 251 to 270 (LWGWLFLLAAPLLVKQARYV). The Cytoplasmic portion of the chain corresponds to 271 to 286 (MREMDPVAMRPMLERT). The helical transmembrane segment at 287–307 (VKGALLTNLLFVLGIFLSQWA) threads the bilayer. Ala308 is a topological domain (periplasmic).

This sequence belongs to the MenA family. Type 1 subfamily.

The protein localises to the cell inner membrane. The catalysed reaction is an all-trans-polyprenyl diphosphate + 1,4-dihydroxy-2-naphthoate + H(+) = a 2-demethylmenaquinol + CO2 + diphosphate. Its pathway is quinol/quinone metabolism; menaquinone biosynthesis; menaquinol from 1,4-dihydroxy-2-naphthoate: step 1/2. Conversion of 1,4-dihydroxy-2-naphthoate (DHNA) to demethylmenaquinone (DMK). Attaches octaprenylpyrophosphate, a membrane-bound 40-carbon side chain to DHNA. The conversion of DHNA to DMK proceeds in three stages: the removal of the carboxyl group of DHNA as CO(2), the attachment of the isoprenoid side chain, and a quinol-to-quinone oxidation, which is thought to be spontaneous. In Escherichia coli (strain K12), this protein is 1,4-dihydroxy-2-naphthoate octaprenyltransferase.